The following is a 477-amino-acid chain: MADMLGLMQRLEFAVSRLERLSSGLHEPPGGCGEVNSLSRGIVAPSVEAFDKLINSMVAEFLKNSRVLAGDVETHAEMVHGAFQAQRAFLLMVSQHQQPQENEVAVLLKPISEKIQEIQTFRERNRGSDMFNHLSAVSESIAALGWIAVSPKPGPYVKEMNDAATFYTNRVLRDYKHSDLRHVDWVRSYLKIWSELQAYIKEHHTTGLTWSKTGPVASTASAFSILSSGPGLPPPPPPPPPPGPPPPFENEGGKEEPSPSRSALFAQLNQGEAITKGLRHVTDDKKIYKNPSLRAQGQIRSPTKTRTPSPTSSKSNSPQKHAPVLELEGKKWRVEYQEDRNDLVISETELKQVAYIFKCDKSTLQIKGKVNSITVDNCKKFGLVFDHVVGIVEVINSKDIQIQVMGRVPTISINKTEGCHLYLSKDALDCEIVSAKSSEMNVLVPQGDDYREFPIPEQFKTIWDGSKLITEPAEIMA.

An N-acetylalanine modification is found at Ala-2. 2 disordered regions span residues 224 to 262 (SILS…PSRS) and 274 to 324 (ITKG…HAPV). Over residues 231-248 (GLPPPPPPPPPPGPPPPF) the composition is skewed to pro residues. The span at 300-318 (RSPTKTRTPSPTSSKSNSP) shows a compositional bias: low complexity. Phosphoserine occurs at positions 301 and 309. In terms of domain architecture, C-CAP/cofactor C-like spans 318–455 (PQKHAPVLEL…QGDDYREFPI (138 aa)).

This sequence belongs to the CAP family. As to expression, found at relatively high levels in testes, at moderate levels in brain, heart and skeletal muscle, at lower levels in lung, skin, kidney and small intestine, and is undetectable in liver or spleen.

Its subcellular location is the cell membrane. Its function is as follows. Involved in the regulation of actin polymerization. The polypeptide is Adenylyl cyclase-associated protein 2 (Cap2) (Rattus norvegicus (Rat)).